Reading from the N-terminus, the 467-residue chain is Gustatory and odorant receptor 22 (467 aa).

Topologically, residues 1–106 (MIHTQMEDAQ…MPRTTFTWCS (106 aa)) are cytoplasmic. Residues 107 to 127 (KAFLWAYFIYACETVIVLVVA) form a helical membrane-spanning segment. Over 128 to 144 (RERINKFISTSDKRFDE) the chain is Extracellular. The helical transmembrane segment at 145–165 (VIYNIIFMSIMVPHFLLPVAS) threads the bilayer. The Cytoplasmic portion of the chain corresponds to 166 to 198 (WRNGSEVAKFKNMWTDFQYKYLIVTGKPIVFPK). A helical membrane pass occupies residues 199–219 (LYPITWTLCIVSWSLSLVIIL). Residues 220–238 (SQYYLQPDFQFCHTFAYYH) are Extracellular-facing. The chain crosses the membrane as a helical span at residues 239 to 259 (IIAMLNGFCSLWFVNCTAFGT). Over 260 to 304 (ASKAFAKELTDVLATERPAAKLTEYRHLWVDLSHMMQQLGKAYSN) the chain is Cytoplasmic. The chain crosses the membrane as a helical span at residues 305–325 (MYGIYCLVIFFTTIIATYGSL). Residues 326-337 (SEIIEHGATYKE) are Extracellular-facing. Residues 338-358 (VGLFVIVFYCMSLLFIICNEA) traverse the membrane as a helical segment. Residues 359-414 (HHASKRVGLNFQERLLNVNLTAVDKATQKEVEMFLVAIDKNPPTMNLDGYANINRG) lie on the Cytoplasmic side of the membrane. The helical transmembrane segment at 415–435 (LITSNISFMATYLVVLMQFKL) threads the bilayer. The Extracellular portion of the chain corresponds to 436 to 467 (TLLRQSAKNAFISALKANLSRIRSLDADKVNT). Asn453 is a glycosylation site (N-linked (GlcNAc...) asparagine).

The protein belongs to the insect chemoreceptor superfamily. Gustatory receptor (GR) family. Gr21a subfamily. Carbon dioxide-responsive neurons coexpress GPRgr22 and GPRgr24 in the maxillary palp at both larval and adult life stages.

Its subcellular location is the cell membrane. Gustatory receptor which mediates acceptance or avoidance behavior, depending on its substrates. GPRgr22 and GPRgr24 together are sufficient for olfactory carbon dioxide-chemosensation. The chain is Gustatory and odorant receptor 22 from Anopheles gambiae (African malaria mosquito).